The sequence spans 370 residues: MNFKVLYQDNNARCGVFNFNQEIIETPVFMPVGTYGAVKSISTEEIKNTGSRIILSNAFHLYFRPGLEIIKLHGNLHNFMNWSGPILTDSGGFQVFSLSRFCKVNEEGVIFQNHIDGKKTFLTPKISMKIQSDLGSNIVMIFDQCIEYNQNWEKTKNAMERSLYWAKKSRIYFDSYKNKNSLFGIIHGGIYPSLRDISLQELIKIDFDGYALGGLAVGEPKIEMYKLLDHICPQIPKNKPRYLMGVGKPEDLIEGVRRGVDMFDCVIPTRNARNGHLFVTNGVIKIRNKKYKKDLSCLDNTCVCYTCRYYSRSYLHHLDACNEILGARLNTIHNLHYYQTLMSNIRNSIKNNTFEQFSVNFYKQKNKIDF.

The Proton acceptor role is filled by D89. Substrate is bound by residues 89–93 (DSGGF), D143, and G214. Positions 245 to 251 (GVGKPED) are RNA binding. Catalysis depends on D264, which acts as the Nucleophile. Positions 269–273 (TRNAR) are RNA binding; important for wobble base 34 recognition. Zn(2+)-binding residues include C302, C304, C307, and H333.

Belongs to the queuine tRNA-ribosyltransferase family. In terms of assembly, homodimer. Within each dimer, one monomer is responsible for RNA recognition and catalysis, while the other monomer binds to the replacement base PreQ1. Requires Zn(2+) as cofactor.

It catalyses the reaction 7-aminomethyl-7-carbaguanine + guanosine(34) in tRNA = 7-aminomethyl-7-carbaguanosine(34) in tRNA + guanine. The protein operates within tRNA modification; tRNA-queuosine biosynthesis. Functionally, catalyzes the base-exchange of a guanine (G) residue with the queuine precursor 7-aminomethyl-7-deazaguanine (PreQ1) at position 34 (anticodon wobble position) in tRNAs with GU(N) anticodons (tRNA-Asp, -Asn, -His and -Tyr). Catalysis occurs through a double-displacement mechanism. The nucleophile active site attacks the C1' of nucleotide 34 to detach the guanine base from the RNA, forming a covalent enzyme-RNA intermediate. The proton acceptor active site deprotonates the incoming PreQ1, allowing a nucleophilic attack on the C1' of the ribose to form the product. After dissociation, two additional enzymatic reactions on the tRNA convert PreQ1 to queuine (Q), resulting in the hypermodified nucleoside queuosine (7-(((4,5-cis-dihydroxy-2-cyclopenten-1-yl)amino)methyl)-7-deazaguanosine). This chain is Queuine tRNA-ribosyltransferase, found in Buchnera aphidicola subsp. Acyrthosiphon pisum (strain APS) (Acyrthosiphon pisum symbiotic bacterium).